A 124-amino-acid chain; its full sequence is p53-regulated apoptosis-inducing protein 1 (124 aa).

Residues 1–16 show a composition bias toward polar residues; it reads MGSSSEASFRSAQASC. Residues 1-46 form a disordered region; sequence MGSSSEASFRSAQASCSGARRQGLGRGDQNLSVMPPNGRAQTHTPG.

Only found to be expressed in thymus.

The protein resides in the mitochondrion. Functionally, may play an important role in mediating p53/TP53-dependent apoptosis. This Homo sapiens (Human) protein is p53-regulated apoptosis-inducing protein 1 (TP53AIP1).